Consider the following 775-residue polypeptide: E3 ubiquitin-protein ligase ICP0 (775 aa).

Positions 1-112 (MEPRPGASTR…PPREDGGSDE (112 aa)) are disordered. 2 stretches are compositionally biased toward basic and acidic residues: residues 10–21 (RRPEGRPQREPA) and 45–57 (VGGR…HDDD). Positions 58–69 (SASEADSTDTEL) are enriched in acidic residues. A Phosphothreonine; by host; by CK1 modification is found at Thr67. Residues 116 to 157 (CAVCTDEIAPHLRCDTFPCMHRFCIPCMKTWMQLRNTCPLCN) form an RING-type zinc finger. The tract at residues 221 to 636 (RALSPTHPEP…HAETSGAVPA (416 aa)) is disordered. Positions 231–243 (TTDEDDDDLDDAD) are enriched in acidic residues. The segment covering 258–284 (RRGAAAPPVTGGASHAAPQPAAARTAP) has biased composition (low complexity). Over residues 293-302 (GSSNTNTTTN) the composition is skewed to polar residues. Low complexity predominate over residues 310-321 (RQSRAAAPRGAS). Residues 322–331 (GPSGGVGVGV) are compositionally biased toward gly residues. The segment covering 369-390 (PASPHRPPAAPMPGSAPRPGPP) has biased composition (pro residues). Residues 391–409 (ASAAASGPARPRAAVAPCV) show a composition bias toward low complexity. Pro residues predominate over residues 410-421 (RAPPPGPGPRAP). The span at 422 to 431 (APGAEPAARP) shows a compositional bias: low complexity. Positions 439-453 (QSHSSLAQAANQEQS) are enriched in polar residues. A compositionally biased stretch (gly residues) spans 464–476 (GSGGPGVEGGHGP). Residues 477-493 (SRGAAPSGAAPLPSAAS) are compositionally biased toward low complexity. A compositionally biased stretch (polar residues) spans 509 to 519 (GQENPSPQSTR). The span at 539–549 (GPGGRGQGGPG) shows a compositional bias: gly residues. Low complexity predominate over residues 550 to 592 (TPLTSSAASASSSSASSSSAPTPAGAASSAAGAASSSASASSG). Positions 617 to 626 (GPRKCARKTR) are enriched in basic residues.

This sequence belongs to the simplexviruses ICp0 family. As to quaternary structure, interacts directly with human RCOR1/CoREST protein, leading to the disruption of the human BHC corepressor complex. Interacts with human CENPA, leading to its degradation. Interacts with human USP7; this interaction modulates ICP0 stability. Interacts with human CDC34. Interacts (when phosphorylated) with human RNF8 (via FHA domain). Interacts with human TRIM27. Interacts with human ZBP1. Interacts with host MORC3; this interaction promotes the degradation of host MORC3. Phosphorylated at Thr-67, leading to promote interaction with host RNF8. Phosphorylated by host CHEK2; leading to increased SUMO-targeted ubiquitin ligase activity of ICP0. In terms of processing, auto-ubiquitinated. Deubiquitinated by host USP7; leading to stabilize it.

The protein localises to the host cytoplasm. It is found in the host nucleus. It carries out the reaction S-ubiquitinyl-[E2 ubiquitin-conjugating enzyme]-L-cysteine + [acceptor protein]-L-lysine = [E2 ubiquitin-conjugating enzyme]-L-cysteine + N(6)-ubiquitinyl-[acceptor protein]-L-lysine.. In terms of biological role, SUMO-targeted ubiquitin ligase that plays an essential role in nuclear antiviral defense evasion triggered by dsDNA viruses. Acts during the initial stages of lytic infection and the reactivation of latent viral genome. Prevents the antiviral effect of nuclear bodies by degrading host PML, SP100 and MORC3. Prevents antiviral response to viral DNA induced by IFI16 by degrading it. Additionally, inhibits host IRF3 nuclear signaling to prevent interferon production by the infected cells. Interestingly, the E3 ubiquitin ligase activity associated with the RING finger domain does not seem to be directly required to inhibit the activation of IRF3 but instead plays a critical role in modulating the cellular localization of ICP0. Upon reactivation of latent genome, suppresses the silencing of viral DNA by dissociating either HDAC1 or HDAC2 from the HDAC-RCOR1-REST-KDM1A complex localized at the ND10 structures and causes their dispersal. Two cellular histone ubiquitin ligases RNF8 and RNF168 are also targeted by ICP0 for degradation, leading to a loss of ubiquitinated forms of H2A, a relief of transcriptional repression, and the activation of latent viral genomes. Enhances the localization of host CCND3 to ND10 bodies that serve as precursors of replication compartments to enable efficient viral replication. Like many RING-finger E3 ubiquitin ligases, ICP0 can induce its own ubiquitination, an activity that promotes its instability due to its targeting to the 26S proteasome for degradation. ICP0 restricts this process by recruiting the cellular ubiquitin-specific protease USP7 that cleaves the anchored ubiquitin chains from ICP0, thereby promoting its stabilization. The polypeptide is E3 ubiquitin-protein ligase ICP0 (ICP0) (Homo sapiens (Human)).